Consider the following 247-residue polypeptide: Orotidine 5'-phosphate decarboxylase (247 aa).

Residues D16, K38, 66–75, T130, R191, Q200, G220, and R221 contribute to the substrate site; that span reads DLKFHDIPNT. The Proton donor role is filled by K68.

Belongs to the OMP decarboxylase family. Type 1 subfamily. Homodimer.

The enzyme catalyses orotidine 5'-phosphate + H(+) = UMP + CO2. It functions in the pathway pyrimidine metabolism; UMP biosynthesis via de novo pathway; UMP from orotate: step 2/2. Functionally, catalyzes the decarboxylation of orotidine 5'-monophosphate (OMP) to uridine 5'-monophosphate (UMP). This Rhodospirillum rubrum (strain ATCC 11170 / ATH 1.1.1 / DSM 467 / LMG 4362 / NCIMB 8255 / S1) protein is Orotidine 5'-phosphate decarboxylase.